A 360-amino-acid chain; its full sequence is tRNA (guanine(37)-N(1))-methyltransferase (360 aa).

S-adenosyl-L-methionine is bound by residues Arg-197, 235-236, and Asn-283; that span reads DL.

This sequence belongs to the class I-like SAM-binding methyltransferase superfamily. TRM5/TYW2 family. As to quaternary structure, monomer.

It localises to the mitochondrion matrix. It is found in the nucleus. Its subcellular location is the cytoplasm. It catalyses the reaction guanosine(37) in tRNA + S-adenosyl-L-methionine = N(1)-methylguanosine(37) in tRNA + S-adenosyl-L-homocysteine + H(+). Specifically methylates the N1 position of guanosine-37 in various cytoplasmic and mitochondrial tRNAs. Methylation is not dependent on the nature of the nucleoside 5' of the target nucleoside. This is the first step in the biosynthesis of wybutosine (yW), a modified base adjacent to the anticodon of tRNAs and required for accurate decoding. The sequence is that of tRNA (guanine(37)-N(1))-methyltransferase from Encephalitozoon cuniculi (strain GB-M1) (Microsporidian parasite).